Consider the following 2312-residue polypeptide: Protein Ycf2 (2312 aa).

An ATP-binding site is contributed by 1630–1637 (GSIGTGRS).

Belongs to the Ycf2 family.

The protein localises to the plastid. Its subcellular location is the chloroplast stroma. Its function is as follows. Probable ATPase of unknown function. Its presence in a non-photosynthetic plant (Epifagus virginiana) and experiments in tobacco indicate that it has an essential function which is probably not related to photosynthesis. The chain is Protein Ycf2 from Manihot esculenta (Cassava).